We begin with the raw amino-acid sequence, 202 residues long: HTH-type transcriptional regulator BetI (202 aa).

In terms of domain architecture, HTH tetR-type spans 8–68 (PIRRRQLIDA…ATMRDITRQL (61 aa)). Residues 31 to 50 (TIAQIARRAGVSAGIISHYF) constitute a DNA-binding region (H-T-H motif).

It participates in amine and polyamine biosynthesis; betaine biosynthesis via choline pathway [regulation]. In terms of biological role, repressor involved in the biosynthesis of the osmoprotectant glycine betaine. It represses transcription of the choline transporter BetT and the genes of BetAB involved in the synthesis of glycine betaine. This Cronobacter sakazakii (strain ATCC BAA-894) (Enterobacter sakazakii) protein is HTH-type transcriptional regulator BetI.